A 793-amino-acid polypeptide reads, in one-letter code: E3 UFM1-protein ligase 1 (793 aa).

An N-acetylalanine modification is found at A2. Residues 2-200 (ADAWEEIRRL…RGLFSAITRP (199 aa)) are mediates interaction with DDRGK1. Positions 2 to 212 (ADAWEEIRRL…VNSLVSKYGF (211 aa)) are required for E3 UFM1-protein ligase activity. Positions 121–250 (DQLSEEVNDK…KAVFVPDIYS (130 aa)) are involved in CDK5RAP3-binding. Positions 200-400 (PTPVNSLVSK…NPVHLITEED (201 aa)) are mediates interaction with TRIP4. The segment at 410–473 (VNTSKKDKKD…SSHGGKKKPD (64 aa)) is disordered. R433 carries the post-translational modification Omega-N-methylarginine. 2 positions are modified to phosphoserine: S458 and S462. A mediates interaction with CDK5RAP3 region spans residues 490 to 683 (IQDAPEEFIS…QLKVTEDPAL (194 aa)). At T535 the chain carries Phosphothreonine. Residues 742–765 (NKKTGQGEDPSSDELDKEQHDVTN) are disordered. A phosphoserine mark is found at S752 and S753.

Belongs to the UFL1 family. In terms of assembly, catalytic component of the UFM1 ribosome E3 ligase (UREL) complex, composed of UFL1, DDRGK1 and CDK5RAP3. Interacts with E2-like enzyme UFC1. Interacts with RELA. Interacts with NBN; promoting recruitment to double-strand breaks following DNA damage. Interacts (when phosphorylated) with YWHAG/14-3-3-gamma; sequestering UFL1 and preventing its association with PDCD1/PD-1 substrate. Ubiquitinated, leading to its degradation by the proteasome. Interaction with CDK5RAP3 protects both proteins against ubiquitination and degradation via the proteasome. Post-translationally, phosphorylated at Ser-462 by ATM, enhancing protein ligase activity and promoting ATM activation in a positive feedback loop. Phosphorylation at Thr-535 by AMPK promotes its interaction with YWHAG/14-3-3-gamma, thereby preventing UFL1 association with PDCD1/PD-1 substrate. In terms of tissue distribution, ubiquitously expressed with higher expression in pancreatic islets and other secretory tissues. In the embryonic brain at 17 dpc, detected in Sox2-positive neural stem cells and in Slc1a3/GLAST-positive radial glia. In perinatal brain, highly expressed in Slc1a3-positive Bergmann glia of the cerebellum. Continues to be expressed in Bergmann glia of adult brain at 16 weeks. Expressed in adult heart. Highly expressed in the intestinal exocrine cells.

The protein localises to the endoplasmic reticulum membrane. It localises to the cytoplasm. The protein resides in the cytosol. It is found in the nucleus. Its subcellular location is the chromosome. E3 protein ligase that mediates ufmylation, the covalent attachment of the ubiquitin-like modifier UFM1 to lysine residues on target proteins, and which plays a key role in various processes, such as ribosome recycling, response to DNA damage, interferon response or reticulophagy (also called ER-phagy). Catalyzes ufmylation of many protein, such as CD274/PD-L1, CDK5RAP3, CYB5R3, DDRGK1, EIF6, histone H4, MRE11, P4HB, PDCD1/PD-1, TRIP4, RPN1, RPS20/uS10, RPL10/uL16, RPL26/uL24, SYVN1/HRD1 and TP53/p53. As part of the UREL complex, plays a key role in ribosome recycling by catalyzing mono-ufmylation of RPL26/uL24 subunit of the 60S ribosome. Ufmylation of RPL26/uL24 occurs on free 60S ribosomes following ribosome dissociation: it weakens the junction between post-termination 60S subunits and SEC61 translocons, promoting release and recycling of the large ribosomal subunit from the endoplasmic reticulum membrane. Ufmylation of RPL26/uL24 and subsequent 60S ribosome recycling either take place after normal termination of translation or after ribosome stalling during cotranslational translocation at the endoplasmic reticulum. Involved in reticulophagy in response to endoplasmic reticulum stress by mediating ufmylation of proteins such as CYB5R3 and RPN1, thereby promoting lysosomal degradation of ufmylated proteins. Ufmylation in response to endoplasmic reticulum stress is essential for processes such as hematopoiesis, blood vessel morphogenesis or inflammatory response. Mediates ufmylation of DDRGK1 and CDK5RAP3; the role of these modifications is however unclear: as both DDRGK1 and CDK5RAP3 act as substrate adapters for ufmylation, it is uncertain whether ufmylation of these proteins is a collateral effect or is required for ufmylation. Acts as a negative regulator of T-cell activation by mediating ufmylation and stabilization of PDCD1/PD-1. Also involved in the response to DNA damage: recruited to double-strand break sites following DNA damage and mediates monoufmylation of histone H4 and ufmylation of MRE11. Mediates ufmylation of TP53/p53, promoting its stability. Catalyzes ufmylation of TRIP4, thereby playing a role in nuclear receptor-mediated transcription. Required for hematopoietic stem cell function and hematopoiesis. The sequence is that of E3 UFM1-protein ligase 1 from Mus musculus (Mouse).